A 227-amino-acid polypeptide reads, in one-letter code: Urease accessory protein UreF (227 aa).

This sequence belongs to the UreF family. As to quaternary structure, ureD, UreF and UreG form a complex that acts as a GTP-hydrolysis-dependent molecular chaperone, activating the urease apoprotein by helping to assemble the nickel containing metallocenter of UreC. The UreE protein probably delivers the nickel.

It is found in the cytoplasm. Its function is as follows. Required for maturation of urease via the functional incorporation of the urease nickel metallocenter. The protein is Urease accessory protein UreF of Methylobacillus flagellatus (strain ATCC 51484 / DSM 6875 / VKM B-1610 / KT).